The sequence spans 440 residues: C4-dicarboxylate TRAP transporter large permease protein DctM (440 aa).

Transmembrane regions (helical) follow at residues 4–24, 54–74, 89–109, 112–132, 148–168, 181–201, 230–250, 255–275, 291–311, 318–338, 349–369, 370–390, and 410–430; these read LIIF…SISL, FEIM…HGGV, WHGG…AVSG, PATV…QGFP, ILIP…GMVV, VGEL…FLAF, AAWG…GIFT, AAMS…DLTL, MLLY…HEGI, WMVN…ILLL, IVLI…IDPV, HFGI…PVGL, and VWPW…VPAI.

This sequence belongs to the TRAP transporter large permease family. As to quaternary structure, the complex comprises the extracytoplasmic solute receptor protein DctP, and the two transmembrane proteins DctQ and DctM.

It localises to the cell inner membrane. In terms of biological role, part of the tripartite ATP-independent periplasmic (TRAP) transport system DctPQM involved in C4-dicarboxylates uptake. This is C4-dicarboxylate TRAP transporter large permease protein DctM from Rhodobacter capsulatus (Rhodopseudomonas capsulata).